Reading from the N-terminus, the 580-residue chain is Jasmonoyl--L-amino acid synthetase JAR6 (580 aa).

Ser-100 is a binding site for ATP. A jasmonate-binding site is contributed by Ser-103. Residues Met-120, Thr-123, Gly-164, Asn-169, and 332 to 337 contribute to the ATP site; that span reads GSSEGW. 167 to 171 lines the an L-alpha-amino acid pocket; the sequence is TTNVY. 329 to 332 contributes to the jasmonate binding site; it reads ADYG. 534 to 538 contributes to the an L-alpha-amino acid binding site; the sequence is KILDH.

It belongs to the IAA-amido conjugating enzyme family.

It catalyses the reaction a jasmonate + an L-alpha-amino acid + ATP = a jasmonyl-L-amino acid + AMP + diphosphate + H(+). In terms of biological role, catalyzes the synthesis of jasmonate-amino acid conjugates by adenylation. Catalyzes the conjugation of jasmonate (JA) to Ile, Leu and Val. Catalyzes the conjugation of JA to Ile that may mediate defense signaling and resistance to the herbivore Manduca sexta caterpillars. The protein is Jasmonoyl--L-amino acid synthetase JAR6 (JAR6) of Nicotiana attenuata (Coyote tobacco).